A 241-amino-acid chain; its full sequence is Pyridoxal phosphate phosphatase PHOSPHO2 (241 aa).

D8 serves as the catalytic Nucleophile. Positions 8 and 10 each coordinate Mg(2+). Catalysis depends on D10, which acts as the Proton donor. 2 residues coordinate substrate: D19 and D99. D179 contacts Mg(2+).

This sequence belongs to the HAD-like hydrolase superfamily. PHOSPHO family. It depends on Mg(2+) as a cofactor.

The catalysed reaction is pyridoxal 5'-phosphate + H2O = pyridoxal + phosphate. Its function is as follows. Phosphatase that has high activity toward pyridoxal 5'-phosphate (PLP). Also active at much lower level toward pyrophosphate, phosphoethanolamine (PEA), phosphocholine (PCho), phospho-l-tyrosine, fructose-6-phosphate, p-nitrophenyl phosphate, and h-glycerophosphate. The polypeptide is Pyridoxal phosphate phosphatase PHOSPHO2 (PHOSPHO2) (Bos taurus (Bovine)).